The sequence spans 872 residues: MATKRKASALNAAVDDEPVDPSDELAFYCLGGGNEVGRSCHIIQYKGKTVMLDAGMHPAKEGFSALPFFDEFDLSTVDILLISHFHVDHSSALPYVLSKTNFKGRVFMTHATKAIYKWLIQDNVRVSNTASSSDQRTTLYTEHDHLSTLPLIETIDFNTTHTVNSIRITPFPAGHVLGAAMFLISIAGLNILFTGDYSREEDRHLIPAEVPKGIKIDVLITESTFGISTNPPRLEREAALMKSITGILNRGGRVLMPVFALGRAQELLLILDEYWETHPELQKIPIYYIGNTARRCMVVYQTYIGAMNDNIKRLFRQRMAEAEASGDKSASAGPWDFKFVRSLRSLERFDDVGGCVMLASPGMLQTGTSRELLERWAPNERNGVVMTGYSVEGTMAKQLLNEPEQIPAVMSRSAGGVSRRGLAGTDEEQKIMIPRRCTVDEISFAAHVDGVENRNFIEEVAAPVVILVHGEKHQMMRLKSKLLSLNADKAVKVKVYTPANCDEVRIPFRKDKIAKVVGKLAQVAPPSDQDDGRLMSGVLVQNGFDLSLMAPDDLREYAGLTTTTITCKQHITLSSASMDLIRWALEGTFGAIEELGSNERSKVKEESTKAVNGEQEIKEEPADEEIPMEETQTYLVMGCVLIRYHSRTREVELEWEGNMMNDGVADAVMAVLLTVESSPASVKQSAKLKHHHHHHSDLELPNPHAHQGPEETFENLLMMLEAQFGSNIAPIERPRIPSGIRANRTTKADPSVSAAVKTKSDAAGETPAESQEDESTEEIEAAELARLQALGIPYPGIEIKVDKHVARVWLENFEVECANTVLRDRVRVVIERAVETVSSMWGEGHPAARASNGTQGNKEVAVSKSNEIEARA.

The Zn(2+) site is built by His84, His86, Asp88, His89, His175, and Asp196. The active-site Proton donor is the His447. Residue His469 coordinates Zn(2+). 3 disordered regions span residues 682 to 706, 741 to 777, and 844 to 872; these read VKQSAKLKHHHHHHSDLELPNPHAH, RANRTTKADPSVSAAVKTKSDAAGETPAESQEDESTE, and GHPAARASNGTQGNKEVAVSKSNEIEARA. The segment covering 686–695 has biased composition (basic residues); sequence AKLKHHHHHH.

Belongs to the metallo-beta-lactamase superfamily. RNA-metabolizing metallo-beta-lactamase-like family. CPSF2/YSH1 subfamily.

The protein localises to the nucleus. Component of the cleavage factor I (CF I) involved in pre-mRNA 3'-end processing. The protein is Endoribonuclease ysh1 (ysh1) of Aspergillus fumigatus (strain ATCC MYA-4609 / CBS 101355 / FGSC A1100 / Af293) (Neosartorya fumigata).